A 550-amino-acid polypeptide reads, in one-letter code: DNA mismatch repair protein MutL (550 aa).

It belongs to the DNA mismatch repair MutL/HexB family.

Its function is as follows. This protein is involved in the repair of mismatches in DNA. It is required for dam-dependent methyl-directed DNA mismatch repair. May act as a 'molecular matchmaker', a protein that promotes the formation of a stable complex between two or more DNA-binding proteins in an ATP-dependent manner without itself being part of a final effector complex. This Microcystis aeruginosa (strain NIES-843 / IAM M-2473) protein is DNA mismatch repair protein MutL.